A 417-amino-acid polypeptide reads, in one-letter code: UDP-N-acetylglucosamine 1-carboxyvinyltransferase (417 aa).

A phosphoenolpyruvate-binding site is contributed by K22–N23. A UDP-N-acetyl-alpha-D-glucosamine-binding site is contributed by R93. The active-site Proton donor is the C117. 2-(S-cysteinyl)pyruvic acid O-phosphothioketal is present on C117. Residues R122–Q126, D304, and I326 each bind UDP-N-acetyl-alpha-D-glucosamine.

The protein belongs to the EPSP synthase family. MurA subfamily.

Its subcellular location is the cytoplasm. The enzyme catalyses phosphoenolpyruvate + UDP-N-acetyl-alpha-D-glucosamine = UDP-N-acetyl-3-O-(1-carboxyvinyl)-alpha-D-glucosamine + phosphate. It functions in the pathway cell wall biogenesis; peptidoglycan biosynthesis. Its function is as follows. Cell wall formation. Adds enolpyruvyl to UDP-N-acetylglucosamine. This is UDP-N-acetylglucosamine 1-carboxyvinyltransferase from Neisseria meningitidis serogroup A / serotype 4A (strain DSM 15465 / Z2491).